The sequence spans 483 residues: Probable glycine dehydrogenase (decarboxylating) subunit 2 (483 aa).

The disordered stretch occupies residues 1 to 24 (MLIFDHSRPGRTAAAQLPATGGDL). Position 264 is an N6-(pyridoxal phosphate)lysine (Lys-264).

The protein belongs to the GcvP family. C-terminal subunit subfamily. In terms of assembly, the glycine cleavage system is composed of four proteins: P, T, L and H. In this organism, the P 'protein' is a heterodimer of two subunits. Requires pyridoxal 5'-phosphate as cofactor.

The catalysed reaction is N(6)-[(R)-lipoyl]-L-lysyl-[glycine-cleavage complex H protein] + glycine + H(+) = N(6)-[(R)-S(8)-aminomethyldihydrolipoyl]-L-lysyl-[glycine-cleavage complex H protein] + CO2. Functionally, the glycine cleavage system catalyzes the degradation of glycine. The P protein binds the alpha-amino group of glycine through its pyridoxal phosphate cofactor; CO(2) is released and the remaining methylamine moiety is then transferred to the lipoamide cofactor of the H protein. This Thiobacillus denitrificans (strain ATCC 25259 / T1) protein is Probable glycine dehydrogenase (decarboxylating) subunit 2.